Consider the following 201-residue polypeptide: Testis-expressed protein 38 (201 aa).

The helical transmembrane segment at Ile3–Phe23 threads the bilayer.

The protein resides in the membrane. The protein is Testis-expressed protein 38 (Tex38) of Mus musculus (Mouse).